The sequence spans 206 residues: Holliday junction branch migration complex subunit RuvA (206 aa).

A domain I region spans residues 1-64 (MIAKLTGLLD…EDNIQLFGFA (64 aa)). Residues 65–143 (DTEERDWFRL…SFGAPAPAAA (79 aa)) form a domain II region. Positions 144 to 154 (TAGKGGAAPAG) are flexible linker. The domain III stretch occupies residues 154-206 (GPAGAVADAVSALVNLGYRRVEAFTAVNAVAQRLGPEAGVSDLIRAGLKELSP).

It belongs to the RuvA family. Homotetramer. Forms an RuvA(8)-RuvB(12)-Holliday junction (HJ) complex. HJ DNA is sandwiched between 2 RuvA tetramers; dsDNA enters through RuvA and exits via RuvB. An RuvB hexamer assembles on each DNA strand where it exits the tetramer. Each RuvB hexamer is contacted by two RuvA subunits (via domain III) on 2 adjacent RuvB subunits; this complex drives branch migration. In the full resolvosome a probable DNA-RuvA(4)-RuvB(12)-RuvC(2) complex forms which resolves the HJ.

Its subcellular location is the cytoplasm. In terms of biological role, the RuvA-RuvB-RuvC complex processes Holliday junction (HJ) DNA during genetic recombination and DNA repair, while the RuvA-RuvB complex plays an important role in the rescue of blocked DNA replication forks via replication fork reversal (RFR). RuvA specifically binds to HJ cruciform DNA, conferring on it an open structure. The RuvB hexamer acts as an ATP-dependent pump, pulling dsDNA into and through the RuvAB complex. HJ branch migration allows RuvC to scan DNA until it finds its consensus sequence, where it cleaves and resolves the cruciform DNA. In Rhodospirillum centenum (strain ATCC 51521 / SW), this protein is Holliday junction branch migration complex subunit RuvA.